Here is a 181-residue protein sequence, read N- to C-terminus: Large ribosomal subunit protein uL5 (181 aa).

The protein belongs to the universal ribosomal protein uL5 family. As to quaternary structure, part of the 50S ribosomal subunit; part of the 5S rRNA/L5/L18/L25 subcomplex. Contacts the 5S rRNA and the P site tRNA. Forms a bridge to the 30S subunit in the 70S ribosome.

Its function is as follows. This is one of the proteins that bind and probably mediate the attachment of the 5S RNA into the large ribosomal subunit, where it forms part of the central protuberance. In the 70S ribosome it contacts protein S13 of the 30S subunit (bridge B1b), connecting the 2 subunits; this bridge is implicated in subunit movement. Contacts the P site tRNA; the 5S rRNA and some of its associated proteins might help stabilize positioning of ribosome-bound tRNAs. In Helicobacter pylori (strain J99 / ATCC 700824) (Campylobacter pylori J99), this protein is Large ribosomal subunit protein uL5.